The following is a 194-amino-acid chain: Kallikrein-like enzyme LV-Ka (194 aa).

Cystine bridges form between C7–C99, C44–C192, C78–C146, C110–C125, and C136–C161. The Peptidase S1 domain occupies 36-185; that stretch reads LNQEDKFICP…YTEWIQSIIA (150 aa). S140 acts as the Charge relay system in catalysis.

Belongs to the peptidase S1 family. Snake venom subfamily. As to quaternary structure, monomer. In terms of processing, N-glycosylated. As to expression, expressed by the venom gland.

It is found in the secreted. Its activity is regulated as follows. Completely inhibited by the serine protease inhibitors NPGB and PMSF, partially inhibited by benzamidines, and weakly or not inhibited by SBTI and EDTA. In terms of biological role, shows kallikrein-like activity, releasing bradykinin from kininogen. Also activates plasminogen, which is also a plasma kallikrein activity. Is active upon the kallikrein substrates S-2266 and S-2302, suggesting a preference for Arg in P1 position. In vivo, lowers blood pressure after intravenous injection in rat. The sequence is that of Kallikrein-like enzyme LV-Ka from Lachesis muta muta (Bushmaster).